We begin with the raw amino-acid sequence, 150 residues long: Large ribosomal subunit protein uL15 (150 aa).

The segment covering 1 to 15 (MNLSNLQPAEGSTHN) has biased composition (polar residues). The tract at residues 1 to 53 (MNLSNLQPAEGSTHNQNKRVGRGEGSGKGGTAARGHKGAKSRSGYSKKIGFEG) is disordered. The segment covering 23 to 32 (GEGSGKGGTA) has biased composition (gly residues).

It belongs to the universal ribosomal protein uL15 family. Part of the 50S ribosomal subunit.

Its function is as follows. Binds to the 23S rRNA. This is Large ribosomal subunit protein uL15 from Flavobacterium johnsoniae (strain ATCC 17061 / DSM 2064 / JCM 8514 / BCRC 14874 / CCUG 350202 / NBRC 14942 / NCIMB 11054 / UW101) (Cytophaga johnsonae).